A 219-amino-acid chain; its full sequence is Transmembrane emp24 domain-containing protein 10 (219 aa).

Residues 1 to 31 form the signal peptide; sequence MSGLSGPPARRGPFPLALLLLFLLGPRLVLA. The segment at 1–142 is required for interaction with STX17; that stretch reads MSGLSGPPAR…KNYEEIAKVE (142 aa). At 32-185 the chain is on the lumenal side; that stretch reads ISFHLPINSR…RDTNESTNTR (154 aa). The region spanning 41-193 is the GOLD domain; the sequence is RKCLREEIHK…TRVLYFSIFS (153 aa). A required for TMED10 and TMED2 cis-Golgi network localization region spans residues 147 to 178; that stretch reads LEVELRRLEDLSESIVNDFAYMKKREEEMRDT. Dimethylated arginine occurs at positions 171 and 176. A glycan (N-linked (GlcNAc...) asparagine) is linked at N179. The helical transmembrane segment at 186 to 206 threads the bilayer; that stretch reads VLYFSIFSMFCLIGLATWQVF. Residues 204 to 219 form an interaction with COPG1 region; it reads QVFYLRRFFKAKKLIE. Over 207-219 the chain is Cytoplasmic; the sequence is YLRRFFKAKKLIE. The interaction with ARF1 and IL1B stretch occupies residues 207–219; sequence YLRRFFKAKKLIE. A COPII vesicle coat-binding motif is present at residues 211–212; that stretch reads FF. Residues 211-219 carry the COPI vesicle coat-binding motif; the sequence is FFKAKKLIE.

Belongs to the EMP24/GP25L family. In terms of assembly, predominantly dimeric and to a lesser extent monomeric in the ER. Monomer and dimer in ERGIC and cis-Golgi network. Forms homooligomer (via GOLD domain); the assembly is promoted by direct binding with leaderless cargos and may form a protein channel that facilitates cargo entry into the ERGIC. Forms heterooligomeric complexes with other members of the p24 family such as TMED2, TMED7 and TMED9. Interacts (via GOLD domain) with TMED2 (via GOLD domain); the complex is required for export of TMED10 from the ER to the cis-Golgi network; the complex is proposed to be involved in cis-Golgi network dynamics and / or biogenesis. Associates with the COPI vesicle coat subunits (coatomer). Tetramerization of the cytoplasmic domain at the Golgi membrane in vitro; the complex is proposed to interact with COPI coatomer and induce budding of the vesicles. Interacts with COPG1; the interaction involves TMED10 homodimer. Interacts with ARF1 (GDP-bound); the interaction probably involves a TMED10 oligomer. Interacts with SEC23A, SEC24B, SEC24C and SEC24D components of the coat protein complex II/COPII, indicative of an association of TMED10 with the COPII vesicle coat. Interacts with CD59. Interacts with MPPE1/PGAP5; the complex might recruit and sort GPI-anchored proteins to the ER-exit site, or the interaction might lead to recycling of PGAP5 between the ER and the Golgi. Interacts with F2LR1/PAR2. Interacts with KDELR2/ERD2; the interaction is disrupted by KDELR2 ligand. Found in a complex composed at least of SURF4, TMED2 and TMED10. Associates with the presenilin-dependent gamma-secretase complex. Interacts with STX17; the interaction is direct. Interacts with IL-1; the interaction is direct. Interacts with RAB21 (active GTP-bound form); the interaction is indirect and regulates TMED10 abundance and localization at the Golgi.

The protein resides in the endoplasmic reticulum membrane. It is found in the endoplasmic reticulum-Golgi intermediate compartment membrane. Its subcellular location is the golgi apparatus membrane. The protein localises to the golgi apparatus. It localises to the cis-Golgi network membrane. The protein resides in the trans-Golgi network membrane. It is found in the cytoplasmic vesicle. Its subcellular location is the secretory vesicle membrane. The protein localises to the cell membrane. It localises to the melanosome. Functionally, cargo receptor involved in protein vesicular trafficking and quality control in the endoplasmic reticulum (ER) and Golgi. The p24 protein family is a group of transmembrane proteins that bind coat protein complex I/COPI and coat protein complex II/COPII involved in vesicular trafficking between the membranes. Acts at the lumenal side for incorporation of secretory cargo molecules into transport vesicles and involved in vesicle coat formation at the cytoplasmic side. Mainly functions in the early secretory pathway and cycles between the ER, ER-Golgi intermediate compartment (ERGIC) and Golgi, mediating cargo transport through COPI and COPII-coated vesicles. In COPII vesicle-mediated anterograde transport, involved in the transport of GPI-anchored proteins by acting together with TMED2 as their cargo receptor; the function specifically implies SEC24C and SEC24D of the COPII vesicle coat and lipid raft-like microdomains of the ER. Recognizes GPI anchors structural remodeled in the ER by the GPI inositol-deacylase/PGAP1 and the metallophosphoesterase MPPE1/PGAP5. In COPI vesicle-mediated retrograde transport, involved in the biogenesis of COPI vesicles and vesicle coat recruitment. Involved in trafficking of amyloid beta A4 protein and soluble APP-beta release (independent from the modulation of gamma-secretase activity). Involved in the KDELR2-mediated retrograde transport of the toxin A subunit (CTX-A-K63)together with COPI and the COOH terminus of KDELR2. On Golgi membranes, acts as a primary receptor for ARF1-GDP, a GTP-binding protein involved in COPI-vesicle formation. Increases coatomer-dependent GTPase-activating activity of ARFGAP2 which mediates the hydrolysis of ARF1-bound GTP and therefore modulates protein trafficking from the Golgi apparatus. Involved in the exocytic trafficking of G protein-coupled receptors F2LR1/PAR2 (trypsin and tryspin-like enzyme receptor), OPRM1 (opioid receptor) and P2RY4 (UTD and UDP receptor) from the Golgi to the plasma membrane, thus contributing to receptor resensitization. In addition to its cargo receptor activity, may also act as a protein channel after oligomerization, facilitating the post-translational entry of leaderless cytoplasmic cargo into the ERGIC. Involved in the translocation into ERGIC, the vesicle entry and the secretion of leaderless cargos (lacking the secretion signal sequence), including the mature form of interleukin 1/IL-1 family members, the alpha-crystallin B chain HSPB5, the carbohydrate-binding proteins galectin-1/LGALS1 and galectin-3/LGALS3, the microtubule-associated protein Tau/MAPT, and the annexin A1/ANXA1; the translocation process is dependent on cargo protein unfolding and enhanced by chaperones HSP90AB1 and HSP90B1/GRP9. Could also associates with the presenilin-dependent gamma-secretase complex in order to regulate gamma-cleavages of the amyloid beta A4 protein to yield amyloid-beta 40/Abeta40. In Homo sapiens (Human), this protein is Transmembrane emp24 domain-containing protein 10.